A 224-amino-acid chain; its full sequence is Phosphoribosylformylglycinamidine synthase subunit PurQ (224 aa).

Residues 3–224 (FGVVVFPGSN…GLLEKVVALA (222 aa)) form the Glutamine amidotransferase type-1 domain. Cys-86 functions as the Nucleophile in the catalytic mechanism. Residues His-195 and Glu-197 contribute to the active site.

In terms of assembly, part of the FGAM synthase complex composed of 1 PurL, 1 PurQ and 2 PurS subunits.

The protein resides in the cytoplasm. It catalyses the reaction N(2)-formyl-N(1)-(5-phospho-beta-D-ribosyl)glycinamide + L-glutamine + ATP + H2O = 2-formamido-N(1)-(5-O-phospho-beta-D-ribosyl)acetamidine + L-glutamate + ADP + phosphate + H(+). The enzyme catalyses L-glutamine + H2O = L-glutamate + NH4(+). It participates in purine metabolism; IMP biosynthesis via de novo pathway; 5-amino-1-(5-phospho-D-ribosyl)imidazole from N(2)-formyl-N(1)-(5-phospho-D-ribosyl)glycinamide: step 1/2. Its function is as follows. Part of the phosphoribosylformylglycinamidine synthase complex involved in the purines biosynthetic pathway. Catalyzes the ATP-dependent conversion of formylglycinamide ribonucleotide (FGAR) and glutamine to yield formylglycinamidine ribonucleotide (FGAM) and glutamate. The FGAM synthase complex is composed of three subunits. PurQ produces an ammonia molecule by converting glutamine to glutamate. PurL transfers the ammonia molecule to FGAR to form FGAM in an ATP-dependent manner. PurS interacts with PurQ and PurL and is thought to assist in the transfer of the ammonia molecule from PurQ to PurL. In Nostoc sp. (strain PCC 7120 / SAG 25.82 / UTEX 2576), this protein is Phosphoribosylformylglycinamidine synthase subunit PurQ.